The primary structure comprises 511 residues: Cytochrome P450 monooxygenase esdpI (511 aa).

A helical membrane pass occupies residues 14–34 (VRAGLAIGVAILAIIVLFPGI). Heme is bound at residue Cys-453.

The protein belongs to the cytochrome P450 family. The cofactor is heme.

It localises to the membrane. It participates in secondary metabolite biosynthesis; terpenoid biosynthesis. Functionally, cytochrome P450 monooxygenase; part of the cluster that mediates the biosynthesis of shearones, diterpenoid pyrones (DPs) which are structurally diverse meroterpenoids consisting of a diterpene linked by a pyrone, and which may exhibit a range of bioactivities. Whitin the pathway, esdpI takes part in the molecular scaffold modification via the hydroxylation at C-20 and can transform shearone C into shearone G. The molecular scaffold is commonly biosynthesized by a series of enzymes including the non-reducing polyketide synthase (NR-PKS) esdpA that generates an alpha-pyrone; the prenyltransferase esdpC that attaches a geranylgeranyl pyrophosphate (GGPP) produced by the GGPP synthase (GGPPS) esdpD onto the pyrone unit; the FAD-dependent monooxygenase esdpE that converts an olefin on the diterpene unit into an epoxide; and the terpene cyclase esdpB that catalyzes the cyclization reactions to give the molecular backbone shearone A. In the modification steps, esdpF oxidizes the hydroxy group to a ketone at C-3 and esdpG then attaches hydroxy groups at both C-11 and C-12. After that, esdpI hydroxylates at C-20 and esdpH hydroxylates at C-6'. The ether bridge is generated by nucleophilic attack of the hydroxy group at C-20 to the carbonyl carbon at C-3. EsdpH can also functions prior to esdpI. The different combinations of these modification enzymes lead to the production of diverse shearone derivatives, shearone I being the end product of the pathway. The alpha-ketoglutarate-dependent dioxygenase esdpJ seems not to be involved in this pathway. This is Cytochrome P450 monooxygenase esdpI from Penicillium shearii (Eupenicillium shearii).